A 435-amino-acid polypeptide reads, in one-letter code: Temperature-sensitive sn-2 acyl-lipid omega-3 desaturase (ferredoxin), chloroplastic (435 aa).

A chloroplast-targeting transit peptide spans 1-42 (MASSVLSECGFRPLPRFYPKHTTSFASNPKPTFKFNPPLKPP). 2 helical membrane passes run 111 to 131 (MSYVVRDVAIVFGLAAVAAYF) and 134 to 154 (WLLWPLYWFAQGTMFWALFVL). A Histidine box-1 motif is present at residues 156-160 (HDCGH). Positions 192-196 (HRTHH) match the Histidine box-2 motif. The next 2 membrane-spanning stretches (helical) occupy residues 268 to 290 (VLTSTACWTAMAALLVCLNFVMG) and 297 to 319 (LYGIPYWIFVMWLDFVTYLHHHG). A Histidine box-3 motif is present at residues 359 to 363 (HVIHH).

Belongs to the fatty acid desaturase type 1 family.

The protein localises to the plastid. It localises to the chloroplast membrane. The catalysed reaction is a (7Z,10Z)-hexadecadienoyl-containing glycerolipid + 2 reduced [2Fe-2S]-[ferredoxin] + O2 + 2 H(+) = a (7Z,10Z,13Z)-hexadecatrienoyl-containing glycerolipid + 2 oxidized [2Fe-2S]-[ferredoxin] + 2 H2O. It catalyses the reaction a (9Z,12Z)-octadecadienoyl-containing glycerolipid + 2 reduced [2Fe-2S]-[ferredoxin] + O2 + 2 H(+) = (9Z,12Z,15Z)-octadecatrienoyl-containing glycerolipid + 2 oxidized [2Fe-2S]-[ferredoxin] + 2 H2O. The protein operates within lipid metabolism; polyunsaturated fatty acid biosynthesis. In terms of biological role, chloroplast omega-3 fatty acid desaturase introduces the third double bond in the biosynthesis of 16:3 and 18:3 fatty acids, important constituents of plant membranes. It is thought to use ferredoxin as an electron donor and to act on fatty acids esterified to galactolipids, sulfolipids and phosphatidylglycerol. This is Temperature-sensitive sn-2 acyl-lipid omega-3 desaturase (ferredoxin), chloroplastic from Arabidopsis thaliana (Mouse-ear cress).